The sequence spans 155 residues: Small ribosomal subunit protein uS7c (155 aa).

It belongs to the universal ribosomal protein uS7 family. Part of the 30S ribosomal subunit.

Its subcellular location is the plastid. The protein resides in the chloroplast. One of the primary rRNA binding proteins, it binds directly to 16S rRNA where it nucleates assembly of the head domain of the 30S subunit. This chain is Small ribosomal subunit protein uS7c (rps7), found in Aristolochia macrophylla (Dutchman's pipe vine).